We begin with the raw amino-acid sequence, 228 residues long: Ankyrin repeat domain-containing protein 46 (228 aa).

ANK repeat units follow at residues 11-40 (QTNVPLLQACIDGDFTYSKRLLESGFDPNI), 44-74 (RGRTGLHLAAARGNVDICQLLHKFGADPLAT), 77-103 (QGNTALHLCGHVDTIQFLVSNGLKIDI), and 107-138 (QGATPLVLAKRRGVNKDVIRLLESLEEQEVKG). The helical transmembrane segment at 195–215 (VLLLILVIALLSLGIAYYVSG) threads the bilayer.

It localises to the membrane. The chain is Ankyrin repeat domain-containing protein 46 (Ankrd46) from Mus musculus (Mouse).